The sequence spans 114 residues: Protein E7 (114 aa).

The segment at 1–43 (MRGNSVDLQEIVLVQQGEVPENAAVHSGEHSDDEGESEEEERE) is E7 terminal domain. The interval 17 to 49 (GEVPENAAVHSGEHSDDEGESEEEEREQVQQVP) is disordered. The span at 31–42 (SDDEGESEEEER) shows a compositional bias: acidic residues. The segment at 62-99 (CPFCQAIIRFVCVASNTGIRNLQALLVNSHLDLACHAC) is a zinc-finger region. The Nuclear export signal signature appears at 80 to 88 (IRNLQALLV).

This sequence belongs to the papillomaviridae E7 protein family. As to quaternary structure, homodimer. Homooligomer. Interacts with host RB1; this interaction induces dissociation of RB1-E2F1 complex thereby disrupting RB1 activity. Interacts with host EP300; this interaction represses EP300 transcriptional activity. Interacts with protein E2; this interaction inhibits E7 oncogenic activity. Interacts with host TMEM173/STING; this interaction impairs the ability of TMEM173/STING to sense cytosolic DNA and promote the production of type I interferon (IFN-alpha and IFN-beta). In terms of processing, highly phosphorylated.

It localises to the host cytoplasm. It is found in the host nucleus. In terms of biological role, plays a role in viral genome replication by driving entry of quiescent cells into the cell cycle. Stimulation of progression from G1 to S phase allows the virus to efficiently use the cellular DNA replicating machinery to achieve viral genome replication. E7 protein has both transforming and trans-activating activities. Induces the disassembly of the E2F1 transcription factor from RB1, with subsequent transcriptional activation of E2F1-regulated S-phase genes. Interferes with host histone deacetylation mediated by HDAC1 and HDAC2, leading to transcription activation. Also plays a role in the inhibition of both antiviral and antiproliferative functions of host interferon alpha. Interaction with host TMEM173/STING impairs the ability of TMEM173/STING to sense cytosolic DNA and promote the production of type I interferon (IFN-alpha and IFN-beta). The protein is Protein E7 of Human papillomavirus type 41.